A 442-amino-acid polypeptide reads, in one-letter code: Protein IQ-DOMAIN 33 (442 aa).

An IQ domain is found at 159-188 (EEDAAVIIQSAFRSYLAIRRSKEEEETFAK). Residues 184–212 (ETFAKEESFSGEESQDNASMGTSLEAQTG) are disordered. A compositionally biased stretch (polar residues) spans 199 to 212 (DNASMGTSLEAQTG). A calmodulin-binding region spans residues 270 to 282 (RERALAYAFSQQL). The disordered stretch occupies residues 375–442 (EKSSFKPSIS…ETSHKLNSST (68 aa)). Residues 383–402 (ISKRKSVPSYKSQRKHHKLQ) show a composition bias toward basic residues. A Nuclear localization signal motif is present at residues 385–392 (KRKSVPSY).

This sequence belongs to the IQD family. As to quaternary structure, binds to multiple calmodulin (CaM) in the presence of Ca(2+) and CaM-like proteins.

It is found in the nucleus. Its function is as follows. May be involved in cooperative interactions with calmodulins or calmodulin-like proteins. Recruits calmodulin proteins to microtubules, thus being a potential scaffold in cellular signaling and trafficking. May associate with nucleic acids and regulate gene expression at the transcriptional or post-transcriptional level. This chain is Protein IQ-DOMAIN 33, found in Arabidopsis thaliana (Mouse-ear cress).